A 328-amino-acid chain; its full sequence is MTMSAFDLTKQSTRCTKPEMDCVFPRMKVRDETFTFIDGKWVNEVHCQPTFVPQRRLLSKKTENEWSIWEENRALWEENQVLRIENRMLWEENKALQYLQSQNKGVQLVYSDTIQQSLQKDHKLSPFFPERHLGFQVSPGNKALQLVRERSSVLEFFHRQNRTVPTIWKDQQAIVVHEENKGASSVQKDTENTTAAGEGSLGPTCQEEHDAKEESTTPTQNDTKIAPSTEDDNEILQALQDLYQILRVFLKEKCLSDDRESLHALQDESKFFQEEYKKLKLQLNNVKNTVSDITTQMEMLEKELIAITFPIYEEAGKNMANEYQLGEM.

The interval Asn-180–Asp-231 is disordered. Polar residues predominate over residues Gly-182–Ala-195. The segment covering Gln-206–Ser-215 has biased composition (basic and acidic residues). The stretch at Arg-259–Ile-307 forms a coiled coil.

The protein belongs to the chibby family. SPERT subfamily.

The protein is Protein chibby homolog 2 (CBY2) of Gallus gallus (Chicken).